A 304-amino-acid polypeptide reads, in one-letter code: tRNA pseudouridine synthase B (304 aa).

The active-site Nucleophile is Asp-44.

The protein belongs to the pseudouridine synthase TruB family. Type 1 subfamily.

It catalyses the reaction uridine(55) in tRNA = pseudouridine(55) in tRNA. Functionally, responsible for synthesis of pseudouridine from uracil-55 in the psi GC loop of transfer RNAs. This chain is tRNA pseudouridine synthase B, found in Novosphingobium aromaticivorans (strain ATCC 700278 / DSM 12444 / CCUG 56034 / CIP 105152 / NBRC 16084 / F199).